Reading from the N-terminus, the 723-residue chain is Probable inactive serine/threonine-protein kinase fnkD (723 aa).

In terms of domain architecture, Protein kinase spans 33 to 276; the sequence is WEIITQLESN…TTSLPKYSTL (244 aa). FNIP repeat units lie at residues 301-342, 343-384, 385-426, 524-565, 566-606, and 647-690; these read FNQP…ELAS, FNQT…LLSS, FNQP…SLAS, FNQS…ILPS, FNHP…LGDE, and FNIE…FGIT.

Belongs to the protein kinase superfamily. STE Ser/Thr protein kinase family.

The chain is Probable inactive serine/threonine-protein kinase fnkD (fnkD-1) from Dictyostelium discoideum (Social amoeba).